We begin with the raw amino-acid sequence, 187 residues long: Ribosome-recycling factor (187 aa).

It belongs to the RRF family.

It localises to the cytoplasm. In terms of biological role, responsible for the release of ribosomes from messenger RNA at the termination of protein biosynthesis. May increase the efficiency of translation by recycling ribosomes from one round of translation to another. This Xanthobacter autotrophicus (strain ATCC BAA-1158 / Py2) protein is Ribosome-recycling factor.